A 227-amino-acid polypeptide reads, in one-letter code: Ornithine decarboxylase antizyme 1 (227 aa).

The segment at 20-50 is disordered; sequence EGDKPSATVHATRTMPLLSLHSRGGRSSESS. Residues 36–50 show a composition bias toward low complexity; the sequence is LLSLHSRGGRSSESS.

Belongs to the ODC antizyme family. In terms of assembly, interacts with ODC1 and thereby sterically blocks ODC homodimerization. Forms a ternary complex with PSMB4 and OAZ1 before PSMB4 is incorporated into the 20S proteasome. Interacts with AZIN2; this interaction disrupts the interaction between the antizyme and ODC1. Interacts with FAM171A1.

Ornithine decarboxylase (ODC) antizyme protein that negatively regulates ODC activity and intracellular polyamine biosynthesis and uptake in response to increased intracellular polyamine levels. Binds to ODC monomers, inhibiting the assembly of the functional ODC homodimer, and targets the monomers for ubiquitin-independent proteolytic destruction by the 26S proteasome. Triggers ODC degradation by inducing the exposure of a cryptic proteasome-interacting surface of ODC. Stabilizes AZIN2 by interfering with its ubiquitination. Also inhibits cellular uptake of polyamines by inactivating the polyamine uptake transporter. SMAD1/OAZ1/PSMB4 complex mediates the degradation of the CREBBP/EP300 repressor SNIP1. Involved in the translocation of AZIN2 from ER-Golgi intermediate compartment (ERGIC) to the cytosol. The sequence is that of Ornithine decarboxylase antizyme 1 (OAZ1) from Bos taurus (Bovine).